We begin with the raw amino-acid sequence, 486 residues long: Glutamyl-tRNA(Gln) amidotransferase subunit A (486 aa).

Catalysis depends on charge relay system residues Lys-78 and Ser-153. Ser-177 (acyl-ester intermediate) is an active-site residue.

This sequence belongs to the amidase family. GatA subfamily. Heterotrimer of A, B and C subunits.

It carries out the reaction L-glutamyl-tRNA(Gln) + L-glutamine + ATP + H2O = L-glutaminyl-tRNA(Gln) + L-glutamate + ADP + phosphate + H(+). Its function is as follows. Allows the formation of correctly charged Gln-tRNA(Gln) through the transamidation of misacylated Glu-tRNA(Gln) in organisms which lack glutaminyl-tRNA synthetase. The reaction takes place in the presence of glutamine and ATP through an activated gamma-phospho-Glu-tRNA(Gln). The polypeptide is Glutamyl-tRNA(Gln) amidotransferase subunit A (Ruminiclostridium cellulolyticum (strain ATCC 35319 / DSM 5812 / JCM 6584 / H10) (Clostridium cellulolyticum)).